We begin with the raw amino-acid sequence, 211 residues long: Peptidyl-prolyl cis-trans isomerase FKBP14 (211 aa).

The first 19 residues, Met1 to Gly19, serve as a signal peptide directing secretion. Residues Cys38 and Cys96 are joined by a disulfide bond. Residues Gly45–Arg135 form the PPIase FKBP-type domain. The region spanning Arg135–Lys170 is the EF-hand 1 domain. 5 residues coordinate Ca(2+): Asp148, Asn150, Asp152, Arg154, and Glu159. An N-linked (GlcNAc...) asparagine glycan is attached at Asn176. The EF-hand 2 domain maps to His179–Leu211. 4 residues coordinate Ca(2+): Asp192, Asp194, Asp196, and Glu203. The Prevents secretion from ER motif lies at His208–Leu211.

As to quaternary structure, monomer. Homodimer. Interacts with type III, type IV and type X collagens.

It is found in the endoplasmic reticulum lumen. The catalysed reaction is [protein]-peptidylproline (omega=180) = [protein]-peptidylproline (omega=0). Its activity is regulated as follows. Inhibited by tacrolimus/FK506. Its function is as follows. PPIase which accelerates the folding of proteins during protein synthesis. Has a preference for substrates containing 4-hydroxylproline modifications, including type III collagen. May also target type VI and type X collagens. The polypeptide is Peptidyl-prolyl cis-trans isomerase FKBP14 (Fkbp14) (Mus musculus (Mouse)).